Here is a 227-residue protein sequence, read N- to C-terminus: tRNA pseudouridine synthase B (227 aa).

Catalysis depends on D42, which acts as the Nucleophile.

The protein belongs to the pseudouridine synthase TruB family. Type 1 subfamily.

It carries out the reaction uridine(55) in tRNA = pseudouridine(55) in tRNA. Responsible for synthesis of pseudouridine from uracil-55 in the psi GC loop of transfer RNAs. In Ureaplasma parvum serovar 3 (strain ATCC 27815 / 27 / NCTC 11736), this protein is tRNA pseudouridine synthase B.